Reading from the N-terminus, the 343-residue chain is Aspartate carbamoyltransferase catalytic subunit (343 aa).

Residues R91 and T92 each contribute to the carbamoyl phosphate site. Position 119 (K119) interacts with L-aspartate. The carbamoyl phosphate site is built by R141, H171, and Q174. R204 and R259 together coordinate L-aspartate. 2 residues coordinate carbamoyl phosphate: G300 and P301.

This sequence belongs to the aspartate/ornithine carbamoyltransferase superfamily. ATCase family. As to quaternary structure, heterododecamer (2C3:3R2) of six catalytic PyrB chains organized as two trimers (C3), and six regulatory PyrI chains organized as three dimers (R2).

The catalysed reaction is carbamoyl phosphate + L-aspartate = N-carbamoyl-L-aspartate + phosphate + H(+). It participates in pyrimidine metabolism; UMP biosynthesis via de novo pathway; (S)-dihydroorotate from bicarbonate: step 2/3. Its function is as follows. Catalyzes the condensation of carbamoyl phosphate and aspartate to form carbamoyl aspartate and inorganic phosphate, the committed step in the de novo pyrimidine nucleotide biosynthesis pathway. The protein is Aspartate carbamoyltransferase catalytic subunit of Burkholderia vietnamiensis (strain G4 / LMG 22486) (Burkholderia cepacia (strain R1808)).